A 994-amino-acid polypeptide reads, in one-letter code: Probable beta-galactosidase C (994 aa).

The first 19 residues, 1–19 (MKLQSILSCWAILVAQIWA), serve as a signal peptide directing secretion. Tyr-78 serves as a coordination point for substrate. Residue Asn-88 is glycosylated (N-linked (GlcNAc...) asparagine). The substrate site is built by Asn-123, Ala-124, Glu-125, and Asn-183. The Proton donor role is filled by Glu-184. Residue Tyr-247 coordinates substrate. Cysteines 253 and 301 form a disulfide. Asn-272 carries an N-linked (GlcNAc...) asparagine glycan. Glu-283 acts as the Nucleophile in catalysis. Tyr-350 provides a ligand contact to substrate. N-linked (GlcNAc...) asparagine glycosylation is found at Asn-388, Asn-407, Asn-433, Asn-500, Asn-514, Asn-521, Asn-584, Asn-600, Asn-674, Asn-712, Asn-717, Asn-757, Asn-861, and Asn-969.

It belongs to the glycosyl hydrolase 35 family.

The protein localises to the secreted. The catalysed reaction is Hydrolysis of terminal non-reducing beta-D-galactose residues in beta-D-galactosides.. Cleaves beta-linked terminal galactosyl residues from gangliosides, glycoproteins, and glycosaminoglycans. This Aspergillus niger (strain ATCC MYA-4892 / CBS 513.88 / FGSC A1513) protein is Probable beta-galactosidase C (lacC).